Consider the following 278-residue polypeptide: Dehydrogenase/reductase SDR family member 4 (278 aa).

Residue 36–60 participates in NADP(+) binding; the sequence is LVTASTDGIGFAIARRLAQDGAHVV. At Lys-92 the chain carries N6-acetyllysine; alternate. Position 92 is an N6-succinyllysine; alternate (Lys-92). Residue Lys-105 is modified to N6-acetyllysine. Position 169 (Ser-169) interacts with substrate. Tyr-182 functions as the Proton acceptor in the catalytic mechanism. Lys-186 provides a ligand contact to NADP(+). Residue Lys-216 is modified to N6-acetyllysine; alternate. Residue Lys-216 is modified to N6-succinyllysine; alternate. Ser-220 is modified (phosphoserine). N6-succinyllysine is present on residues Lys-227 and Lys-234. Positions 276–278 match the Peroxisomal targeting signal motif; the sequence is SRL.

The protein belongs to the short-chain dehydrogenases/reductases (SDR) family. Homotetramer.

It is found in the peroxisome. It catalyses the reaction a secondary alcohol + NADP(+) = a ketone + NADPH + H(+). The enzyme catalyses 3beta-hydroxy-5beta-pregnane-20-one + NADP(+) = 5beta-pregnan-3,20-dione + NADPH + H(+). The catalysed reaction is 5beta-dihydrotestosterone + NADPH + H(+) = 5beta-androstane-3beta,17beta-diol + NADP(+). It carries out the reaction 5beta-androstane-3,17-dione + NADPH + H(+) = 3beta-hydroxy-5beta-androstane-17-one + NADP(+). It catalyses the reaction isatin + NADPH + H(+) = 3-hydroxyindolin-2-one + NADP(+). The enzyme catalyses lithocholate + NADP(+) = 3-oxo-5beta-cholan-24-oate + NADPH + H(+). The catalysed reaction is 3-oxo-5beta-cholan-24-oate + NADPH + H(+) = isolithocholate + NADP(+). NADPH-dependent oxidoreductase which catalyzes the reduction of a variety of compounds bearing carbonyl groups including ketosteroids, alpha-dicarbonyl compounds, aldehydes, aromatic ketones and quinones. Reduces 3-ketosteroids and benzil into 3beta-hydroxysteroids and R-benzoin, respectively, in contrast to the stereoselectivity of non-primate DHRS4s which produce 3alpha-hydroxysteroids and S-benzoin. Diplays low activity toward all-trans-retinal and no activity toward 9-cis-retinal as compared to non-primate mammals. In the reverse reaction, catalyze the NAD-dependent oxidation of 3beta-hydroxysteroids and alcohol, but with much lower efficiency. Involved in the metabolism of 3beta-hydroxysteroids, isatin and xenobiotic carbonyl compounds. This Pongo abelii (Sumatran orangutan) protein is Dehydrogenase/reductase SDR family member 4 (DHRS4).